Consider the following 312-residue polypeptide: Olfactory receptor 5J2 (312 aa).

Over M1–A25 the chain is Extracellular. N5 carries an N-linked (GlcNAc...) asparagine glycan. Residues V26 to I46 traverse the membrane as a helical segment. Topologically, residues L47 to K54 are cytoplasmic. Residues L55–S75 form a helical membrane-spanning segment. The Extracellular portion of the chain corresponds to A76 to V99. C97 and C189 are oxidised to a cystine. Residues Q100–Y120 traverse the membrane as a helical segment. Over D121–R139 the chain is Cytoplasmic. The helical transmembrane segment at K140 to T160 threads the bilayer. Residues I161–E196 are Extracellular-facing. The chain crosses the membrane as a helical span at residues L197 to S217. The Cytoplasmic portion of the chain corresponds to Y218 to A237. Residues F238–S258 form a helical membrane-spanning segment. Topologically, residues Y259–E271 are extracellular. Residues K272–L292 form a helical membrane-spanning segment. Residues R293–C312 are Cytoplasmic-facing.

This sequence belongs to the G-protein coupled receptor 1 family.

The protein resides in the cell membrane. Functionally, odorant receptor. In Homo sapiens (Human), this protein is Olfactory receptor 5J2 (OR5J2).